Consider the following 510-residue polypeptide: Probable mannosyl-oligosaccharide alpha-1,2-mannosidase 1B (510 aa).

A signal peptide spans 1 to 21 (MHFSSLSLPLTALSLVTPSLA). N-linked (GlcNAc...) asparagine glycans are attached at residues Asn-35, Asn-95, Asn-182, and Asn-249. A disulfide bond links Cys-332 and Cys-361. N-linked (GlcNAc...) asparagine glycosylation is present at Asn-366. Glu-375 functions as the Proton donor in the catalytic mechanism. Ca(2+) is bound at residue Thr-501.

It belongs to the glycosyl hydrolase 47 family. In terms of assembly, monomer. The cofactor is Ca(2+). Mg(2+) is required as a cofactor.

Its subcellular location is the cytoplasmic vesicle lumen. It catalyses the reaction N(4)-(alpha-D-Man-(1-&gt;2)-alpha-D-Man-(1-&gt;2)-alpha-D-Man-(1-&gt;3)-[alpha-D-Man-(1-&gt;2)-alpha-D-Man-(1-&gt;3)-[alpha-D-Man-(1-&gt;2)-alpha-D-Man-(1-&gt;6)]-alpha-D-Man-(1-&gt;6)]-beta-D-Man-(1-&gt;4)-beta-D-GlcNAc-(1-&gt;4)-beta-D-GlcNAc)-L-asparaginyl-[protein] (N-glucan mannose isomer 9A1,2,3B1,2,3) + 4 H2O = N(4)-(alpha-D-Man-(1-&gt;3)-[alpha-D-Man-(1-&gt;3)-[alpha-D-Man-(1-&gt;6)]-alpha-D-Man-(1-&gt;6)]-beta-D-Man-(1-&gt;4)-beta-D-GlcNAc-(1-&gt;4)-beta-D-GlcNAc)-L-asparaginyl-[protein] (N-glucan mannose isomer 5A1,2) + 4 beta-D-mannose. The catalysed reaction is N(4)-(alpha-D-Man-(1-&gt;2)-alpha-D-Man-(1-&gt;2)-alpha-D-Man-(1-&gt;3)-[alpha-D-Man-(1-&gt;3)-[alpha-D-Man-(1-&gt;2)-alpha-D-Man-(1-&gt;6)]-alpha-D-Man-(1-&gt;6)]-beta-D-Man-(1-&gt;4)-beta-D-GlcNAc-(1-&gt;4)-beta-D-GlcNAc)-L-asparaginyl-[protein] (N-glucan mannose isomer 8A1,2,3B1,3) + 3 H2O = N(4)-(alpha-D-Man-(1-&gt;3)-[alpha-D-Man-(1-&gt;3)-[alpha-D-Man-(1-&gt;6)]-alpha-D-Man-(1-&gt;6)]-beta-D-Man-(1-&gt;4)-beta-D-GlcNAc-(1-&gt;4)-beta-D-GlcNAc)-L-asparaginyl-[protein] (N-glucan mannose isomer 5A1,2) + 3 beta-D-mannose. It participates in protein modification; protein glycosylation. Its function is as follows. Involved in the maturation of Asn-linked oligosaccharides. Progressively trims alpha-1,2-linked mannose residues from Man(9)GlcNAc(2) to produce Man(5)GlcNAc(2). The polypeptide is Probable mannosyl-oligosaccharide alpha-1,2-mannosidase 1B (mns1B) (Aspergillus flavus (strain ATCC 200026 / FGSC A1120 / IAM 13836 / NRRL 3357 / JCM 12722 / SRRC 167)).